The primary structure comprises 223 residues: Ribose-5-phosphate isomerase A (223 aa).

Substrate is bound by residues 32–35 (TGST), 85–88 (DGAD), and 98–101 (KGGG). The Proton acceptor role is filled by Glu107. Lys125 is a binding site for substrate.

The protein belongs to the ribose 5-phosphate isomerase family. Homodimer.

It catalyses the reaction aldehydo-D-ribose 5-phosphate = D-ribulose 5-phosphate. The protein operates within carbohydrate degradation; pentose phosphate pathway; D-ribose 5-phosphate from D-ribulose 5-phosphate (non-oxidative stage): step 1/1. In terms of biological role, catalyzes the reversible conversion of ribose-5-phosphate to ribulose 5-phosphate. This Marinomonas sp. (strain MWYL1) protein is Ribose-5-phosphate isomerase A.